A 528-amino-acid polypeptide reads, in one-letter code: Putative ABC transporter ATP-binding protein MA_1418 (528 aa).

ABC transporter domains lie at 2–242 (IELR…TNLT) and 262–494 (ISVK…SDYK). Residues 36–43 (GHSAAGKT) and 294–301 (GENGSGKT) each bind ATP.

This sequence belongs to the ABC transporter superfamily.

It is found in the cell membrane. Functionally, probably part of an ABC transporter complex. Responsible for energy coupling to the transport system. In Methanosarcina acetivorans (strain ATCC 35395 / DSM 2834 / JCM 12185 / C2A), this protein is Putative ABC transporter ATP-binding protein MA_1418.